Reading from the N-terminus, the 292-residue chain is Coiled-coil domain-containing protein 192 (292 aa).

Residues 28–55 (SVVPESDTSERSSMTSGSSESDIPQENK) are disordered. A compositionally biased stretch (low complexity) spans 38 to 49 (RSSMTSGSSESD). Coiled coils occupy residues 65–174 (QMAF…LATA) and 222–258 (IMELSTQVSLQTERITQLKEVLEEKERKIQQLEAERS). Basic and acidic residues predominate over residues 251-267 (QQLEAERSPHPPQEVKD). Residues 251–292 (QQLEAERSPHPPQEVKDPPGCLPEAPVFSTHDIPPVVSDENL) are disordered.

The sequence is that of Coiled-coil domain-containing protein 192 from Homo sapiens (Human).